Here is a 154-residue protein sequence, read N- to C-terminus: Lipoprotein signal peptidase (154 aa).

Transmembrane regions (helical) follow at residues 55–75 and 84–104; these read GHMW…IYIM and LFSI…IDRV. Active-site residues include D111 and D129. Residues 124 to 144 form a helical membrane-spanning segment; sequence IFNVADASLSVGVVLMLVYVF.

It belongs to the peptidase A8 family.

It localises to the cell membrane. It carries out the reaction Release of signal peptides from bacterial membrane prolipoproteins. Hydrolyzes -Xaa-Yaa-Zaa-|-(S,diacylglyceryl)Cys-, in which Xaa is hydrophobic (preferably Leu), and Yaa (Ala or Ser) and Zaa (Gly or Ala) have small, neutral side chains.. It functions in the pathway protein modification; lipoprotein biosynthesis (signal peptide cleavage). Its function is as follows. This protein specifically catalyzes the removal of signal peptides from prolipoproteins. This chain is Lipoprotein signal peptidase, found in Listeria monocytogenes serovar 1/2a (strain ATCC BAA-679 / EGD-e).